Reading from the N-terminus, the 161-residue chain is Cyclic pyranopterin monophosphate synthase (161 aa).

Residues 75 to 77 (LCH) and 113 to 114 (ME) contribute to the substrate site. The active site involves D128.

It belongs to the MoaC family. As to quaternary structure, homohexamer; trimer of dimers.

The enzyme catalyses (8S)-3',8-cyclo-7,8-dihydroguanosine 5'-triphosphate = cyclic pyranopterin phosphate + diphosphate. It participates in cofactor biosynthesis; molybdopterin biosynthesis. In terms of biological role, catalyzes the conversion of (8S)-3',8-cyclo-7,8-dihydroguanosine 5'-triphosphate to cyclic pyranopterin monophosphate (cPMP). This chain is Cyclic pyranopterin monophosphate synthase, found in Enterobacter sp. (strain 638).